Consider the following 148-residue polypeptide: Sporulation inhibitor of replication protein SirA (148 aa).

Belongs to the SirA family. In terms of assembly, interacts with DnaA. Forms a 1:1 complex with domain I of DnaA.

It localises to the cytoplasm. Its function is as follows. Inhibits DNA replication initiation during sporulation, preventing overinitiation and thus enforcing diploidy; probably the main regulator of sporulation replication initiation under Spo0A control. During sporulation SirA prevents DnaA association with the replication origin to prevent excessive chromosome replication. Alternatively SirA binds to domain I of DnaA and prevent its interaction with DnaD, preventing DNA replication initiation. Upon ectopic expression during vegetative growth reduces chromosome copy number, leading to elongated cells with that can have a single nucleoid or be anucleate. Ectopic expression during vegetative growth blocks DnaA at oriC while blocking recruitment of DnaD to oriC. Plays a significant role during the onset of sporulation. This is Sporulation inhibitor of replication protein SirA from Bacillus subtilis (strain 168).